A 428-amino-acid chain; its full sequence is C4-dicarboxylate transport protein (428 aa).

Transmembrane regions (helical) follow at residues 8–28 (SLYV…HFYP), 44–64 (LIKM…IAGM), 76–96 (VALL…LIIV), 142–162 (IGAF…LFGF), 184–204 (VIFG…FGAM), 222–242 (LIIC…GSIA), 289–309 (VVGL…SIYL), 326–346 (IFHQ…AAGV), and 352–372 (IVLA…LALI).

It belongs to the dicarboxylate/amino acid:cation symporter (DAACS) (TC 2.A.23) family.

The protein localises to the cell inner membrane. Functionally, responsible for the transport of dicarboxylates such as succinate, fumarate, and malate from the periplasm across the membrane. This is C4-dicarboxylate transport protein from Klebsiella pneumoniae subsp. pneumoniae (strain ATCC 700721 / MGH 78578).